The primary structure comprises 70 residues: Small ribosomal subunit protein bS21 (70 aa).

Belongs to the bacterial ribosomal protein bS21 family.

The sequence is that of Small ribosomal subunit protein bS21 from Neisseria gonorrhoeae (strain ATCC 700825 / FA 1090).